The following is a 108-amino-acid chain: UPF0166 protein MJ1524 (108 aa).

It belongs to the UPF0166 family.

The sequence is that of UPF0166 protein MJ1524 from Methanocaldococcus jannaschii (strain ATCC 43067 / DSM 2661 / JAL-1 / JCM 10045 / NBRC 100440) (Methanococcus jannaschii).